A 487-amino-acid polypeptide reads, in one-letter code: Solute carrier family 22 member 15-like (487 aa).

A helical transmembrane segment spans residues 23 to 43 (FLTLLQIYVACQSMLIVLVGA). The N-linked (GlcNAc...) asparagine glycan is linked to N70. Transmembrane regions (helical) follow at residues 90–110 (LASS…GPLS), 117–137 (PVYL…ALAP), 141–161 (VFAV…LVSF), 178–198 (SLTN…GFYI), 203–223 (TLAF…FVLP), 286–306 (ILLM…TLNA), 315–335 (LNVA…LYFI), 345–365 (ATAG…FVPE), 374–394 (TVLA…VYIY), 408–428 (LGVC…IPAM), and 435–455 (MPFV…LLLP).

Belongs to the major facilitator (TC 2.A.1) superfamily. Organic cation transporter (TC 2.A.1.19) family.

The protein localises to the membrane. Functionally, probably transports organic cations. This Xenopus laevis (African clawed frog) protein is Solute carrier family 22 member 15-like (slc22a15b).